Consider the following 509-residue polypeptide: Probable basic-leucine zipper transcription factor H (509 aa).

A disordered region spans residues 1–42; it reads MMNSPRSLDSSDGSVDSSSVYSGTSSFGSSFTSSTGSGFTNS. Positions 10–39 are enriched in low complexity; the sequence is SSDGSVDSSSVYSGTSSFGSSFTSSTGSGF. Residues 50 to 113 form the bZIP domain; the sequence is AKKKKIRQMQ…NENYLKINQL (64 aa). Positions 51-77 are basic motif; it reads KKKKIRQMQNRQSAAQYRERKKEYLEK. Positions 78–99 are leucine-zipper; it reads LETIVDNLESDRNQLLQQTKQL. Disordered regions lie at residues 134–185, 223–275, 290–414, and 465–509; these read LLSK…SNNG, FSHL…SRFN, IENV…IINN, and SNNN…GIPK. Low complexity-rich tracts occupy residues 226–248, 255–269, 292–350, 361–414, 465–483, and 490–509; these read LQQQQQQQPQQQNSPQILQSPIP, PIQQISPSSPNQNIN, NVNN…SNRS, QQQQ…IINN, SNNNNSNNNNSGLENNSPS, and NGGINNISSGNLNSLKGIPK.

Belongs to the bZIP family.

It localises to the nucleus. Its function is as follows. Probable transcriptional regulator. The polypeptide is Probable basic-leucine zipper transcription factor H (bzpH) (Dictyostelium discoideum (Social amoeba)).